The sequence spans 155 residues: Cyanate hydratase (155 aa).

Catalysis depends on residues Arg95, Glu98, and Ser121.

Belongs to the cyanase family.

The catalysed reaction is cyanate + hydrogencarbonate + 3 H(+) = NH4(+) + 2 CO2. In terms of biological role, catalyzes the reaction of cyanate with bicarbonate to produce ammonia and carbon dioxide. This Pseudomonas syringae pv. syringae (strain B728a) protein is Cyanate hydratase.